Reading from the N-terminus, the 364-residue chain is Aminomethyltransferase (364 aa).

Belongs to the GcvT family. In terms of assembly, the glycine cleavage system is composed of four proteins: P, T, L and H.

The enzyme catalyses N(6)-[(R)-S(8)-aminomethyldihydrolipoyl]-L-lysyl-[protein] + (6S)-5,6,7,8-tetrahydrofolate = N(6)-[(R)-dihydrolipoyl]-L-lysyl-[protein] + (6R)-5,10-methylene-5,6,7,8-tetrahydrofolate + NH4(+). The glycine cleavage system catalyzes the degradation of glycine. In Shewanella halifaxensis (strain HAW-EB4), this protein is Aminomethyltransferase.